The sequence spans 271 residues: Large ribosomal subunit protein uL15c (271 aa).

Disordered stretches follow at residues 1 to 21 (MASL…NNYP) and 66 to 120 (SNVS…QKSR). A chloroplast-targeting transit peptide spans 1-61 (MASLLSLSST…KESTRLVVVA (61 aa)). Over residues 66–76 (SNVSPSIGSGS) the composition is skewed to low complexity. Over residues 91–101 (SRKKGKRKGRG) the composition is skewed to basic residues. Residues 102–114 (HAAGQGGSCGFGM) show a composition bias toward gly residues.

In terms of assembly, component of the chloroplast large ribosomal subunit (LSU). Mature 70S chloroplast ribosomes of higher plants consist of a small (30S) and a large (50S) subunit. The 30S small subunit contains 1 molecule of ribosomal RNA (16S rRNA) and 24 different proteins. The 50S large subunit contains 3 rRNA molecules (23S, 5S and 4.5S rRNA) and 33 different proteins.

It localises to the plastid. It is found in the chloroplast. Its function is as follows. Component of the chloroplast ribosome (chloro-ribosome), a dedicated translation machinery responsible for the synthesis of chloroplast genome-encoded proteins, including proteins of the transcription and translation machinery and components of the photosynthetic apparatus. This Spinacia oleracea (Spinach) protein is Large ribosomal subunit protein uL15c (RPL15).